The primary structure comprises 230 residues: Flagellar L-ring protein (230 aa).

Residues 1–15 form the signal peptide; sequence MSRPPLLSSACLAAT. C16 is lipidated: N-palmitoyl cysteine. A lipid anchor (S-diacylglycerol cysteine) is attached at C16.

This sequence belongs to the FlgH family. As to quaternary structure, the basal body constitutes a major portion of the flagellar organelle and consists of four rings (L,P,S, and M) mounted on a central rod.

It is found in the cell outer membrane. The protein localises to the bacterial flagellum basal body. In terms of biological role, assembles around the rod to form the L-ring and probably protects the motor/basal body from shearing forces during rotation. This Xanthomonas oryzae pv. oryzae (strain MAFF 311018) protein is Flagellar L-ring protein.